The following is a 240-amino-acid chain: uncharacterized protein (240 aa).

A helical membrane pass occupies residues 73–93 (LLGCLYFFIYFVAPTLGPVLF).

Belongs to the universal ribosomal protein uS3 family.

Its subcellular location is the mitochondrion membrane. This is an uncharacterized protein from Arabidopsis thaliana (Mouse-ear cress).